We begin with the raw amino-acid sequence, 314 residues long: Serine/threonine-protein phosphatase PP2A-5 catalytic subunit (314 aa).

Positions 62, 64, 90, and 122 each coordinate Mn(2+). The active-site Proton donor is His-123. Mn(2+)-binding residues include His-172 and His-246.

It belongs to the PPP phosphatase family. PP-2A subfamily. The cofactor is Mn(2+).

Its subcellular location is the cytoplasm. It catalyses the reaction O-phospho-L-seryl-[protein] + H2O = L-seryl-[protein] + phosphate. The enzyme catalyses O-phospho-L-threonyl-[protein] + H2O = L-threonyl-[protein] + phosphate. The protein is Serine/threonine-protein phosphatase PP2A-5 catalytic subunit (NPP5) of Nicotiana tabacum (Common tobacco).